A 417-amino-acid polypeptide reads, in one-letter code: Calreticulin (417 aa).

A signal peptide spans 1–17; it reads MLLSVPLLLGLLGLAAA. Positions 18–197 are N-domain; sequence EPAVYFKEQF…NSQVESGSLE (180 aa). Gln26 lines the Ca(2+) pocket. Residue Lys48 is modified to N6-acetyllysine. Lys62 and Lys64 together coordinate Ca(2+). The residue at position 64 (Lys64) is an N6-(2-hydroxyisobutyryl)lysine. Cysteines 105 and 137 form a disulfide. Positions 109, 111, 128, and 135 each coordinate an alpha-D-glucoside. Lys159 carries the N6-acetyllysine modification. The stretch at 191 to 202 is one 1-1 repeat; that stretch reads VESGSLEDDWDF. A 4 X approximate repeats region spans residues 191 to 255; the sequence is VESGSLEDDW…DAKKPEDWDE (65 aa). Positions 193 to 277 are disordered; the sequence is SGSLEDDWDF…NPEYKGEWKP (85 aa). The segment at 198 to 308 is P-domain; that stretch reads DDWDFLPPKK…YSPDANIYAY (111 aa). The segment covering 207–251 has biased composition (basic and acidic residues); that stretch reads KIKDPDAAKPEDWDERAKIDDPTDSKPEDWDKPEHIPDPDAKKPE. Lys209 is modified (N6-acetyllysine). Tandem repeats lie at residues 210-221, 227-238, 244-255, 259-269, 273-283, and 287-297. The interval 237-270 is interaction with PPIB; that stretch reads DKPEHIPDPDAKKPEDWDEEMDGEWEPPVIQNPE. The span at 252–261 shows a compositional bias: acidic residues; that stretch reads DWDEEMDGEW. The segment at 259 to 297 is 3 X approximate repeats; that stretch reads GEWEPPVIQNPEYKGEWKPRQIDNPDYKGTWIHPEIDNP. The C-domain stretch occupies residues 309 to 417; that stretch reads DSFAVLGLDL…TTPGQTKDEL (109 aa). Asp317 provides a ligand contact to an alpha-D-glucoside. Asp328 serves as a coordination point for Ca(2+). The segment at 350 to 417 is disordered; that stretch reads TKASEKQMKD…TTPGQTKDEL (68 aa). Basic and acidic residues predominate over residues 352-379; the sequence is ASEKQMKDKQDEEQRLKEEEEDKKRKEE. Residues 380–408 are compositionally biased toward acidic residues; the sequence is EEAEDKEDEDDRDEDEEDEDEKEEDEEDT. Positions 414-417 match the Prevents secretion from ER motif; it reads KDEL.

The protein belongs to the calreticulin family. In terms of assembly, monomer. Component of an EIF2 complex at least composed of CELF1/CUGBP1, CALR, CALR3, EIF2S1, EIF2S2, HSP90B1 and HSPA5. Interacts with PDIA3/ERp57 and SPACA9. Interacts with TRIM21. Interacts with NR3C1. Interacts with PPIB. Interacts (via P-domain) with PDIA5. Interacts with GABARAP. Interacts with CLCC1.

It localises to the endoplasmic reticulum lumen. Its subcellular location is the cytoplasm. The protein resides in the cytosol. The protein localises to the cytolytic granule. It is found in the secreted. It localises to the extracellular space. Its subcellular location is the extracellular matrix. The protein resides in the cell surface. The protein localises to the sarcoplasmic reticulum lumen. It is found in the cytoplasmic vesicle. It localises to the secretory vesicle. Its subcellular location is the cortical granule. Calcium-binding chaperone that promotes folding, oligomeric assembly and quality control in the endoplasmic reticulum (ER) via the calreticulin/calnexin cycle. This lectin interacts transiently with almost all of the monoglucosylated glycoproteins that are synthesized in the ER. Interacts with the DNA-binding domain of NR3C1 and mediates its nuclear export. Involved in maternal gene expression regulation. May participate in oocyte maturation via the regulation of calcium homeostasis. Present in the cortical granules of non-activated oocytes, is exocytosed during the cortical reaction in response to oocyte activation and might participate in the block to polyspermy. In Cricetulus griseus (Chinese hamster), this protein is Calreticulin (CALR).